A 393-amino-acid chain; its full sequence is MAVAVVFGASGISGWGITKALLDAKTQNAFSKIIALTNRSLSLAESGLPDDDRLQLHSGIDLQANVDDVIAKLRERIPSIGNVTHVFYTAFSTSHTDNQLMMKASNTKMLRTMVEAMETVAPSLSFIAVQTGSNHYGILFAEVLGERFGPVPLKEDLPRLPSPLRDSLMFYAMADEMDELSRGKSWKWCDIRPDMIVGYLPRPNSHSIAESIGYYLAFHAYLTPGEEVPFPGSEAAWNAKFSLTGQGVLGNFNVHLACKNSIENGEAFNIANKPFTTWASLWPLLAGYWGLKGTAPVGHHGIPDAASWVLDNMDRVKGWEEKYSMKPGRLFKIPWRYFHWALNMPFDRYLDLTRCEQTGFQQHEEHKESFETAWKCMQEAKLLPIVDKSSTPP.

Leucine 54 provides a ligand contact to NADP(+). The active-site Proton donor is serine 233. The Lowers pKa of active site Tyr role is filled by lysine 259. Alanine 286 is a binding site for NADP(+).

It belongs to the short-chain dehydrogenases/reductases (SDR) family. Highly divergent.

The protein operates within mycotoxin biosynthesis. Functionally, short chain dehydrogenase; part of the gene cluster that mediates the biosynthesis of sirodesmin PL, an epipolythiodioxopiperazine (ETP) characterized by a disulfide bridged cyclic dipeptide and that acts as a phytotoxin which is involved in the blackleg didease of canola. SirD catalyzes the O-prenylation of L-tyrosine (L-Tyr) in the presence of dimethylallyl diphosphate (DMAPP) to yield 4-O-dimethylallyl-L-Tyr, and therefore represents probably the first pathway-specific enzyme in the biosynthesis of sirodesmin PL. 4-O-dimethylallyl-L-Tyr, then undergoes condensation with L-Ser in a reaction catalyzed by the non-ribosomal peptide synthase sirP to form the diketopiperazine (DKP) backbone. Further bishydroxylation of the DKP performed by the cytochrome P450 monooxygenase sirC leads to the production of the intermediate phomamide. This step is essential to form the reactive thiol group required for toxicity of sirodesmin PL. The next steps of sirodesmin biosynthesis are not well understood yet, but some predictions could be made from intermediate compounds identification. Phomamide is converted into phomalizarine via oxidation, probably by sirT. Further oxidation, methylation (by sirM or sirN) and reduction steps convert phomalizarine to deacetyl sirodesmin. Finally, acetyltransferase sirH probably acetylates deacetyl sirodesmin to produce sirodesmin PL. In Leptosphaeria maculans (Blackleg fungus), this protein is Short chain dehydrogenase sirQ.